The sequence spans 87 residues: MSQADFDKAAEEVKRLKTQPTDEEMLFIYSHFKQATVGDVNTDRPGLLDLKGKAKWDSWNKLKGTSKENAMKTYVEKVEELKKKYGI.

Serine 2 carries the post-translational modification N-acetylserine. One can recognise an ACB domain in the interval 2–87; it reads SQADFDKAAE…VEELKKKYGI (86 aa). The residue at position 8 (lysine 8) is an N6-acetyllysine; alternate. Position 8 is an N6-succinyllysine; alternate (lysine 8). An acyl-CoA is bound at residue lysine 14. Lysine 17 is subject to N6-succinyllysine. A Phosphotyrosine modification is found at tyrosine 29. An acyl-CoA contacts are provided by residues 29–33, lysine 51, lysine 55, and tyrosine 74; that span reads YSHFK. Position 51 is an N6-acetyllysine (lysine 51). Position 55 is an N6-acetyllysine; alternate (lysine 55). Lysine 55 bears the N6-succinyllysine; alternate mark. Position 55 is an N6-(2-hydroxyisobutyryl)lysine; alternate (lysine 55). At lysine 55 the chain carries N6-malonyllysine; alternate. Lysine 77 carries the N6-acetyllysine; alternate modification. The residue at position 77 (lysine 77) is an N6-succinyllysine; alternate.

The protein belongs to the ACBP family. In terms of assembly, monomer.

The protein localises to the endoplasmic reticulum. The protein resides in the golgi apparatus. Functionally, binds medium- and long-chain acyl-CoA esters with very high affinity and may function as an intracellular carrier of acyl-CoA esters. It is also able to displace diazepam from the benzodiazepine (BZD) recognition site located on the GABA type A receptor. It is therefore possible that this protein also acts as a neuropeptide to modulate the action of the GABA receptor. This chain is Acyl-CoA-binding protein (Dbi), found in Rattus norvegicus (Rat).